The sequence spans 101 residues: Urease subunit gamma (101 aa).

It belongs to the urease gamma subunit family. In terms of assembly, heterotrimer of UreA (gamma), UreB (beta) and UreC (alpha) subunits. Three heterotrimers associate to form the active enzyme.

The protein resides in the cytoplasm. The enzyme catalyses urea + 2 H2O + H(+) = hydrogencarbonate + 2 NH4(+). Its pathway is nitrogen metabolism; urea degradation; CO(2) and NH(3) from urea (urease route): step 1/1. The protein is Urease subunit gamma of Corynebacterium kroppenstedtii (strain DSM 44385 / JCM 11950 / CIP 105744 / CCUG 35717).